Reading from the N-terminus, the 436-residue chain is Prenyltransferase nscD (436 aa).

Belongs to the tryptophan dimethylallyltransferase family.

It functions in the pathway secondary metabolite biosynthesis. In terms of biological role, prenyltransferase; part of the gene cluster that mediates the biosynthesis of neosartoricin B, a prenylated anthracenone that probably exhibits T-cell antiproliferative activity, suggestive of a physiological role as an immunosuppressive agent. The non-reducing polyketide synthase nscA probably synthesizes and cyclizes the decaketide backbone. The hydrolase nscB then mediates the product release through hydrolysis followed by spontaneous decarboxylation. The prenyltransferase nscD catalyzes the addition of the dimethylallyl group to the aromatic C5. The FAD-dependent monooxygenase nscC is then responsible for the stereospecific hydroxylation at C2. Neosartoricin B can be converted into two additional compounds neosartoricins C and D. Neosartoricin C is a spirocyclic compound that is cyclized through the attack of C3 hydroxyl on C14, followed by dehydration. On the other hand, neosartoricin D is a further cyclized compound in which attack of C2 on C14 in neosartoricin C results in the formation of the acetal-containing dioxabicyclo-octanone ring. Both of these compounds are novel and possibly represent related metabolites of the gene cluster. This Trichophyton rubrum (strain ATCC MYA-4607 / CBS 118892) (Athlete's foot fungus) protein is Prenyltransferase nscD.